The primary structure comprises 315 residues: Solute carrier family 25 member 32 (315 aa).

3 Solcar repeats span residues 20–109 (HVRY…IKSY), 118–209 (LEAT…LKLK), and 222–306 (LSTV…VSHF). Helical transmembrane passes span 26 to 43 (LVAG…LHPL), 89 to 106 (VWGA…YNAI), 123 to 143 (YLVS…PLWV), 186 to 203 (FVPG…FMAY), 227 to 243 (YISV…AATY), and 281 to 300 (GIAP…FVVY).

Belongs to the mitochondrial carrier (TC 2.A.29) family.

It localises to the mitochondrion inner membrane. The enzyme catalyses FAD(in) = FAD(out). In terms of biological role, facilitates flavin adenine dinucleotide (FAD) translocation across the mitochondrial inner membrane into the mitochondrial matrix where it acts as a redox cofactor to assist flavoenzyme activities in fundamental metabolic processes including fatty acid beta-oxidation, amino acid and choline metabolism as well as mitochondrial electron transportation. In particular, provides FAD to DLD dehydrogenase of the glycine cleavage system, part of mitochondrial one-carbon metabolic pathway involved in neural tube closure in early embryogenesis. In Macaca fascicularis (Crab-eating macaque), this protein is Solute carrier family 25 member 32.